The following is a 241-amino-acid chain: Large ribosomal subunit protein uL3 (241 aa).

Residue Gln-157 is modified to N5-methylglutamine.

This sequence belongs to the universal ribosomal protein uL3 family. As to quaternary structure, part of the 50S ribosomal subunit. Forms a cluster with proteins L14 and L19. Methylated by PrmB.

Its function is as follows. One of the primary rRNA binding proteins, it binds directly near the 3'-end of the 23S rRNA, where it nucleates assembly of the 50S subunit. This Vesicomyosocius okutanii subsp. Calyptogena okutanii (strain HA) protein is Large ribosomal subunit protein uL3.